A 1230-amino-acid polypeptide reads, in one-letter code: Myosin-1 (1230 aa).

A disordered region spans residues 1–32; the sequence is MGISRRPKADKNASAADSAPGGKPNIQKAQFD. Residues 39–713 form the Myosin motor domain; the sequence is VGVSDLTLIS…TLFALEHMRD (675 aa). 132-139 contacts ATP; it reads GESGAGKT. Positions 403 to 485 are actin-binding; the sequence is SIGILDIYGF…PGVFSAMKDA (83 aa). 2 IQ domains span residues 717-737 and 738-763; these read HNMA…RIEA and ATRI…KGHQ. Positions 771 to 961 constitute a TH1 domain; the sequence is RRRYSLLGSR…TIHTQAGEPP (191 aa). 3 disordered regions span residues 945–1018, 1033–1065, and 1116–1230; these read QDHY…AARP, TRNT…PVSK, and AYLE…EDDW. A compositionally biased stretch (polar residues) spans 1033-1045; that stretch reads TRNTSVQSTQSTR. 2 stretches are compositionally biased toward pro residues: residues 1047–1062 and 1122–1142; these read VPPP…PPAP and TPPP…PGPP. The SH3 domain occupies 1064–1123; it reads SKEPQYRVLYEFAGQSANEFSLKQGEIVTVLQKETNGWWLTKNVRGQGWAPTAYLEEVTP. Low complexity predominate over residues 1179–1214; it reads RDSGMSISSNGSGNNSGRSTPTPSLAGGLAEALRAR.

The protein belongs to the TRAFAC class myosin-kinesin ATPase superfamily. Myosin family.

It is found in the cytoplasm. It localises to the cytoskeleton. Its subcellular location is the actin patch. Its function is as follows. Type-I myosin implicated in the organization of the actin cytoskeleton. Required for proper actin cytoskeleton polarization. At the cell cortex, assembles in patch-like structures together with proteins from the actin-polymerizing machinery and promotes actin assembly. Functions as actin nucleation-promoting factor (NPF) for the Arp2/3 complex. This is Myosin-1 (myoA) from Sclerotinia sclerotiorum (strain ATCC 18683 / 1980 / Ss-1) (White mold).